The sequence spans 151 residues: Large ribosomal subunit protein uL22 (151 aa).

Residues 1-18 (MARINYSINADPENTSKA) are compositionally biased toward polar residues. Positions 1–23 (MARINYSINADPENTSKAMGSEL) are disordered.

It belongs to the universal ribosomal protein uL22 family. Part of the 50S ribosomal subunit.

In terms of biological role, this protein binds specifically to 23S rRNA. It makes multiple contacts with different domains of the 23S rRNA in the assembled 50S subunit and ribosome. The globular domain of the protein is located near the polypeptide exit tunnel on the outside of the subunit, while an extended beta-hairpin is found that lines the wall of the exit tunnel in the center of the 70S ribosome. The chain is Large ribosomal subunit protein uL22 from Methanosarcina mazei (strain ATCC BAA-159 / DSM 3647 / Goe1 / Go1 / JCM 11833 / OCM 88) (Methanosarcina frisia).